Reading from the N-terminus, the 313-residue chain is Ethylene-responsive transcription factor ERN2 (313 aa).

Basic and acidic residues predominate over residues 1–10 (MEIQFDEPKK). Positions 1–29 (MEIQFDEPKKSLRPKKVNKFKGRNKKSET) are disordered. The span at 11–24 (SLRPKKVNKFKGRN) shows a compositional bias: basic residues. A DNA-binding region (AP2/ERF) is located at residues 32–89 (KFVGVRQRPSGRYVAEIKDTTQNIRMWLGTFETAEEAARAYDEAATLLRGSKTRTNFV). Disordered stretches follow at residues 108-143 (NRKKGTKQQDMNGISSTTSHADTTNDTTSDGSTSST) and 157-204 (TSAS…SSST). Low complexity-rich tracts occupy residues 122-143 (SSTTSHADTTNDTTSDGSTSST) and 157-193 (TSASGVTSTSTNISTSASGVASTSTDISTNSSNTNVN).

It belongs to the AP2/ERF transcription factor family. ERF subfamily. In terms of tissue distribution, expressed in roots, root hairs and leaves. Expressed in root epidermis and root hairs.

It is found in the nucleus. Functionally, transcription factor involved in symbiotic nodule signaling in response to rhizobial Nod factors (NFs). Binds to the GCC box (NF-responsive box) of ENOD11 promoter. Acts as a transcriptional activator of NF-responsive box-containing target gene promoters in root hairs. Involved in early stages of root nodule development. Functions redundantly with ERN1. Is essential with ERN1 for the initiation of root hair infection, and nodule organogenesis and development. Required for accurate expression of the NF signaling genes ENOD11 and ENOD12. This Medicago truncatula (Barrel medic) protein is Ethylene-responsive transcription factor ERN2.